The following is a 366-amino-acid chain: Ferrochelatase (366 aa).

Histidine 209 and glutamate 290 together coordinate Fe cation.

This sequence belongs to the ferrochelatase family.

Its subcellular location is the cytoplasm. The catalysed reaction is heme b + 2 H(+) = protoporphyrin IX + Fe(2+). It participates in porphyrin-containing compound metabolism; protoheme biosynthesis; protoheme from protoporphyrin-IX: step 1/1. Functionally, catalyzes the ferrous insertion into protoporphyrin IX. This is Ferrochelatase from Teredinibacter turnerae (strain ATCC 39867 / T7901).